A 168-amino-acid chain; its full sequence is Large ribosomal subunit protein uL10 (168 aa).

The protein belongs to the universal ribosomal protein uL10 family. In terms of assembly, part of the ribosomal stalk of the 50S ribosomal subunit. The N-terminus interacts with L11 and the large rRNA to form the base of the stalk. The C-terminus forms an elongated spine to which L12 dimers bind in a sequential fashion forming a multimeric L10(L12)X complex.

In terms of biological role, forms part of the ribosomal stalk, playing a central role in the interaction of the ribosome with GTP-bound translation factors. The polypeptide is Large ribosomal subunit protein uL10 (Ralstonia nicotianae (strain ATCC BAA-1114 / GMI1000) (Ralstonia solanacearum)).